A 428-amino-acid chain; its full sequence is 3-phosphoshikimate 1-carboxyvinyltransferase (428 aa).

3-phosphoshikimate contacts are provided by Lys-22, Ser-23, and Arg-27. Lys-22 contacts phosphoenolpyruvate. Phosphoenolpyruvate is bound by residues Gly-96 and Arg-124. The 3-phosphoshikimate site is built by Ser-170, Ser-171, Gln-172, Ser-198, Asp-314, Asn-337, and Lys-341. A phosphoenolpyruvate-binding site is contributed by Gln-172. Asp-314 serves as the catalytic Proton acceptor. Residues Arg-345, Arg-387, and Lys-412 each coordinate phosphoenolpyruvate.

The protein belongs to the EPSP synthase family. As to quaternary structure, monomer.

Its subcellular location is the cytoplasm. It catalyses the reaction 3-phosphoshikimate + phosphoenolpyruvate = 5-O-(1-carboxyvinyl)-3-phosphoshikimate + phosphate. It participates in metabolic intermediate biosynthesis; chorismate biosynthesis; chorismate from D-erythrose 4-phosphate and phosphoenolpyruvate: step 6/7. Its function is as follows. Catalyzes the transfer of the enolpyruvyl moiety of phosphoenolpyruvate (PEP) to the 5-hydroxyl of shikimate-3-phosphate (S3P) to produce enolpyruvyl shikimate-3-phosphate and inorganic phosphate. The protein is 3-phosphoshikimate 1-carboxyvinyltransferase of Shewanella denitrificans (strain OS217 / ATCC BAA-1090 / DSM 15013).